The following is a 476-amino-acid chain: Aspartyl/glutamyl-tRNA(Asn/Gln) amidotransferase subunit B (476 aa).

The protein belongs to the GatB/GatE family. GatB subfamily. Heterotrimer of A, B and C subunits.

The enzyme catalyses L-glutamyl-tRNA(Gln) + L-glutamine + ATP + H2O = L-glutaminyl-tRNA(Gln) + L-glutamate + ADP + phosphate + H(+). It catalyses the reaction L-aspartyl-tRNA(Asn) + L-glutamine + ATP + H2O = L-asparaginyl-tRNA(Asn) + L-glutamate + ADP + phosphate + 2 H(+). In terms of biological role, allows the formation of correctly charged Asn-tRNA(Asn) or Gln-tRNA(Gln) through the transamidation of misacylated Asp-tRNA(Asn) or Glu-tRNA(Gln) in organisms which lack either or both of asparaginyl-tRNA or glutaminyl-tRNA synthetases. The reaction takes place in the presence of glutamine and ATP through an activated phospho-Asp-tRNA(Asn) or phospho-Glu-tRNA(Gln). The sequence is that of Aspartyl/glutamyl-tRNA(Asn/Gln) amidotransferase subunit B from Neisseria gonorrhoeae (strain ATCC 700825 / FA 1090).